The chain runs to 311 residues: Formimidoylglutamase (311 aa).

Residues histidine 122, aspartate 151, histidine 153, aspartate 155, cysteine 242, and aspartate 244 each coordinate Mn(2+).

It belongs to the arginase family. It depends on Mn(2+) as a cofactor.

It catalyses the reaction N-formimidoyl-L-glutamate + H2O = formamide + L-glutamate. Its pathway is amino-acid degradation; L-histidine degradation into L-glutamate; L-glutamate from N-formimidoyl-L-glutamate (hydrolase route): step 1/1. Catalyzes the conversion of N-formimidoyl-L-glutamate to L-glutamate and formamide. The chain is Formimidoylglutamase from Pseudomonas paraeruginosa (strain DSM 24068 / PA7) (Pseudomonas aeruginosa (strain PA7)).